A 297-amino-acid chain; its full sequence is Non-homologous end-joining factor 1 (297 aa).

Residues 1–131 (MDARLLQLPW…ATVSTVCRHL (131 aa)) are globular head. Residues 220-286 (PKAPTHPKEE…LTHRPPAGAS (67 aa)) are C-terminal tail. Residues 222 to 297 (APTHPKEEDT…PKKKAKGLFM (76 aa)) form a disordered region. A compositionally biased stretch (polar residues) spans 232-255 (GNSASHRPMAESSSISFEKTVPTQ). Residues 263–286 (VSEPSQVPQSSVSCLTHRPPAGAS) are compositionally biased toward low complexity. An XLM motif is present at residues 287–297 (KPKKKAKGLFM). Residues 287 to 297 (KPKKKAKGLFM) show a composition bias toward basic residues.

It belongs to the XRCC4-XLF family. XLF subfamily. As to quaternary structure, homodimer. Interacts with xrcc4; the interaction is direct and is mediated via a head-to-head interaction between N-terminal head regions. Component of the core long-range non-homologous end joining (NHEJ) complex (also named DNA-PK complex) composed of prkdc/DNA-PKcs, lig4, xrcc4, xrcc6/Ku70, xrcc5/Ku80 and nhej1/xlf.

The protein resides in the nucleus. In terms of biological role, DNA repair protein involved in DNA non-homologous end joining (NHEJ); required for double-strand break (DSB) repair and V(D)J recombination. It is also involved in telomere maintenance. Plays a key role in NHEJ by promoting the ligation of various mismatched and non-cohesive ends. In some studies, has been shown to associate with xrcc4 to form alternating helical filaments that bridge DNA and act like a bandage, holding together the broken DNA until it is repaired. Alternatively, it has also been shown that rather than forming filaments, a single nhej1 dimer interacts through both head domains with xrcc4 to promote the close alignment of DNA ends. The xrcc4-nhej1/xlf subcomplex binds to the DNA fragments of a DSB in a highly diffusive manner and robustly bridges two independent DNA molecules, holding the broken DNA fragments in close proximity to one other. The mobility of the bridges ensures that the ends remain accessible for further processing by other repair factors. This chain is Non-homologous end-joining factor 1, found in Xenopus laevis (African clawed frog).